Here is a 545-residue protein sequence, read N- to C-terminus: Monocarboxylate transporter 8 (545 aa).

The tract at residues Met1–Phe98 is disordered. At Ala2 the chain carries N-acetylalanine. Residues Ala2–Glu102 lie on the Cytoplasmic side of the membrane. 2 repeat units span residues Pro29–Val50 and Pro51–Val72. The interval Pro29–Val72 is 2 X 22 AA approximate tandem repeats. A compositionally biased stretch (acidic residues) spans Pro33–Pro45. Positions Glu46–Leu70 are enriched in pro residues. Residues Gly103–Ile123 traverse the membrane as a helical segment. The Extracellular segment spans residues His124–Ala149. A helical transmembrane segment spans residues Ala150–Phe170. At Thr171–Thr181 the chain is on the cytoplasmic side. A helical membrane pass occupies residues Thr182–Leu202. The Extracellular portion of the chain corresponds to Arg203 to Tyr204. Residues Phe205–Ile225 traverse the membrane as a helical segment. Residues Leu226–Gly235 are Cytoplasmic-facing. A helical transmembrane segment spans residues Leu236–Ile256. The Extracellular portion of the chain corresponds to Lys257–Lys264. The helical transmembrane segment at Leu265–Thr285 threads the bilayer. Over Tyr286–Arg328 the chain is Cytoplasmic. The chain crosses the membrane as a helical span at residues Ile329 to Met349. Residues Lys350–Thr362 are Extracellular-facing. The helical transmembrane segment at Trp363 to Ile383 threads the bilayer. Over Ser384 to Lys392 the chain is Cytoplasmic. The helical transmembrane segment at Ile393 to Cys413 threads the bilayer. Residues Arg414–Asp415 are Extracellular-facing. Residues Phe416–Ile436 form a helical membrane-spanning segment. Topologically, residues Met437 to Ala453 are cytoplasmic. A helical transmembrane segment spans residues Ile454–Leu474. The Extracellular portion of the chain corresponds to Leu475–His483. The helical transmembrane segment at Val484 to Pro504 threads the bilayer. Over Leu505 to Ile545 the chain is Cytoplasmic. Residues Glu514–Asp529 are compositionally biased toward basic and acidic residues. Residues Glu514–Ile545 are disordered. Thr540 is modified (phosphothreonine).

This sequence belongs to the major facilitator superfamily. Monocarboxylate porter (TC 2.A.1.13) family. Monomer. Homodimer. Homooligomer. In terms of tissue distribution, expressed at highest levels in liver, lower levels in brain, kidney and heart (at protein level). Expressed in microvessels of the blood-brain barrier (BBB) (at protein level).

The protein resides in the cell membrane. It localises to the apical cell membrane. The catalysed reaction is 3,3',5-triiodo-L-thyronine(out) = 3,3',5-triiodo-L-thyronine(in). It carries out the reaction 3,3',5'-triiodo-L-thyronine(out) = 3,3',5'-triiodo-L-thyronine(in). The enzyme catalyses L-thyroxine(out) = L-thyroxine(in). It catalyses the reaction 3,3'-diiodo-L-thyronine(out) = 3,3'-diiodo-L-thyronine(in). Its function is as follows. Specific thyroid hormone transmembrane transporter, that mediates both uptake and efflux of thyroid hormone across the cell membrane independently of pH or a Na(+) gradient. Major substrates are the iodothyronines T3 and T4 and to a lesser extent rT3 and 3,3-diiodothyronine (3,3'-T2). Acts as an important mediator of thyroid hormone transport, especially T3, through the blood-brain barrier. The protein is Monocarboxylate transporter 8 (SLC16A2) of Rattus norvegicus (Rat).